We begin with the raw amino-acid sequence, 243 residues long: Exosome complex component Rrp41 (243 aa).

It belongs to the RNase PH family. Rrp41 subfamily. Component of the archaeal exosome complex. Forms a hexameric ring-like arrangement composed of 3 Rrp41-Rrp42 heterodimers. The hexameric ring associates with a trimer of Rrp4 and/or Csl4 subunits.

It localises to the cytoplasm. Its function is as follows. Catalytic component of the exosome, which is a complex involved in RNA degradation. Has 3'-&gt;5' exoribonuclease activity. Can also synthesize heteromeric RNA-tails. The chain is Exosome complex component Rrp41 from Sulfolobus acidocaldarius (strain ATCC 33909 / DSM 639 / JCM 8929 / NBRC 15157 / NCIMB 11770).